A 907-amino-acid chain; its full sequence is DNA mismatch repair protein MutS (907 aa).

Residue 656 to 663 (GPNMAGKS) coordinates ATP.

It belongs to the DNA mismatch repair MutS family.

This protein is involved in the repair of mismatches in DNA. It is possible that it carries out the mismatch recognition step. This protein has a weak ATPase activity. In Nitrobacter hamburgensis (strain DSM 10229 / NCIMB 13809 / X14), this protein is DNA mismatch repair protein MutS.